The primary structure comprises 206 residues: Somatotropin (206 aa).

Positions 1 to 22 (MAGLHFFPALLALLMASLQTHQ) are cleaved as a signal peptide. Intrachain disulfides connect C75-C179 and C196-C204.

This sequence belongs to the somatotropin/prolactin family.

The protein resides in the secreted. Functionally, growth hormone plays an important role in growth control and is involved in the regulation of several anabolic processes. Implicated as an osmoregulatory substance important for seawater adaptation. The sequence is that of Somatotropin (gh) from Protopterus annectens (African lungfish).